A 481-amino-acid chain; its full sequence is Proline--tRNA ligase (481 aa).

Belongs to the class-II aminoacyl-tRNA synthetase family. ProS type 3 subfamily. In terms of assembly, homodimer.

The protein resides in the cytoplasm. It carries out the reaction tRNA(Pro) + L-proline + ATP = L-prolyl-tRNA(Pro) + AMP + diphosphate. Functionally, catalyzes the attachment of proline to tRNA(Pro) in a two-step reaction: proline is first activated by ATP to form Pro-AMP and then transferred to the acceptor end of tRNA(Pro). The chain is Proline--tRNA ligase from Chlorobium chlorochromatii (strain CaD3).